The primary structure comprises 505 residues: Histidine ammonia-lyase (505 aa).

The 5-imidazolinone (Ala-Gly) cross-link spans 141–143 (ASG). The residue at position 142 (Ser142) is a 2,3-didehydroalanine (Ser).

The protein belongs to the PAL/histidase family. In terms of processing, contains an active site 4-methylidene-imidazol-5-one (MIO), which is formed autocatalytically by cyclization and dehydration of residues Ala-Ser-Gly.

The protein localises to the cytoplasm. The catalysed reaction is L-histidine = trans-urocanate + NH4(+). It functions in the pathway amino-acid degradation; L-histidine degradation into L-glutamate; N-formimidoyl-L-glutamate from L-histidine: step 1/3. The chain is Histidine ammonia-lyase from Bacillus cereus (strain 03BB102).